Reading from the N-terminus, the 142-residue chain is Large ribosomal subunit protein uL11 (142 aa).

The disordered stretch occupies residues 84 to 103 (AGVKSGSGRPNSDKVGTVTD).

This sequence belongs to the universal ribosomal protein uL11 family. In terms of assembly, part of the ribosomal stalk of the 50S ribosomal subunit. Interacts with L10 and the large rRNA to form the base of the stalk. L10 forms an elongated spine to which L12 dimers bind in a sequential fashion forming a multimeric L10(L12)X complex. One or more lysine residues are methylated.

Its function is as follows. Forms part of the ribosomal stalk which helps the ribosome interact with GTP-bound translation factors. This chain is Large ribosomal subunit protein uL11, found in Aliivibrio salmonicida (strain LFI1238) (Vibrio salmonicida (strain LFI1238)).